We begin with the raw amino-acid sequence, 540 residues long: Ecdysone 20-monooxygenase (540 aa).

C488 lines the heme pocket.

The protein belongs to the cytochrome P450 family. Requires heme as cofactor. As to expression, strong expression by embryonic stage 10 in epidermis, decreases significantly in older embryos. Third instar larvae show expression in the midgut copper cells, Malpighian tubules and fat body. In the adult ovaries, expression is seen in both nurse cells and centripetally migrating follicle cells.

It localises to the mitochondrion membrane. It carries out the reaction ecdysone + AH2 + O2 = 20-hydroxyecdysone + A + H2O. It functions in the pathway steroid biosynthesis; ecdysteroid biosynthesis. Functionally, required for CNS development; midline glial cells. Involved in the metabolism of insect hormones; responsible for all ecdysone 20-monooxygenase activity during embryonic, larval and adult stages. May be involved in the breakdown of synthetic insecticides. The protein is Ecdysone 20-monooxygenase (shd) of Drosophila melanogaster (Fruit fly).